The sequence spans 143 residues: Large ribosomal subunit protein uL11 (143 aa).

This sequence belongs to the universal ribosomal protein uL11 family. As to quaternary structure, part of the ribosomal stalk of the 50S ribosomal subunit. Interacts with L10 and the large rRNA to form the base of the stalk. L10 forms an elongated spine to which L12 dimers bind in a sequential fashion forming a multimeric L10(L12)X complex. One or more lysine residues are methylated.

In terms of biological role, forms part of the ribosomal stalk which helps the ribosome interact with GTP-bound translation factors. This chain is Large ribosomal subunit protein uL11, found in Paraburkholderia phytofirmans (strain DSM 17436 / LMG 22146 / PsJN) (Burkholderia phytofirmans).